The sequence spans 374 residues: Type II methyltransferase M.NgoFVII (374 aa).

The region spanning 16–344 is the SAM-dependent MTase C5-type domain; sequence PKILSLFSGC…KSILPIFSDN (329 aa). C88 is a catalytic residue.

The protein belongs to the class I-like SAM-binding methyltransferase superfamily. C5-methyltransferase family.

The catalysed reaction is a 2'-deoxycytidine in DNA + S-adenosyl-L-methionine = a 5-methyl-2'-deoxycytidine in DNA + S-adenosyl-L-homocysteine + H(+). Its function is as follows. A methylase, recognizes the double-stranded sequence 5'-GCSGC-3', methylates C-5 on both strands, and protects the DNA from cleavage by the NgoFVII endonuclease. This chain is Type II methyltransferase M.NgoFVII (ngoFVIIM), found in Neisseria gonorrhoeae.